Here is a 293-residue protein sequence, read N- to C-terminus: Formamidopyrimidine-DNA glycosylase (293 aa).

Catalysis depends on Pro-2, which acts as the Schiff-base intermediate with DNA. Catalysis depends on Glu-3, which acts as the Proton donor. Lys-60 (proton donor; for beta-elimination activity) is an active-site residue. 3 residues coordinate DNA: His-110, Arg-129, and Arg-174. The FPG-type zinc-finger motif lies at 259 to 293 (NVYRRTGKECRKCGNLIERKKISGRSTHWCPKCQK). Arg-283 (proton donor; for delta-elimination activity) is an active-site residue.

This sequence belongs to the FPG family. Monomer. Requires Zn(2+) as cofactor.

It catalyses the reaction Hydrolysis of DNA containing ring-opened 7-methylguanine residues, releasing 2,6-diamino-4-hydroxy-5-(N-methyl)formamidopyrimidine.. The catalysed reaction is 2'-deoxyribonucleotide-(2'-deoxyribose 5'-phosphate)-2'-deoxyribonucleotide-DNA = a 3'-end 2'-deoxyribonucleotide-(2,3-dehydro-2,3-deoxyribose 5'-phosphate)-DNA + a 5'-end 5'-phospho-2'-deoxyribonucleoside-DNA + H(+). Functionally, involved in base excision repair of DNA damaged by oxidation or by mutagenic agents. Acts as a DNA glycosylase that recognizes and removes damaged bases. Has a preference for oxidized purines, such as 7,8-dihydro-8-oxoguanine (8-oxoG). Has AP (apurinic/apyrimidinic) lyase activity and introduces nicks in the DNA strand. Cleaves the DNA backbone by beta-delta elimination to generate a single-strand break at the site of the removed base with both 3'- and 5'-phosphates. This Prochlorococcus marinus (strain MIT 9215) protein is Formamidopyrimidine-DNA glycosylase.